We begin with the raw amino-acid sequence, 112 residues long: uncharacterized protein (112 aa).

This is an uncharacterized protein from Archaeoglobus fulgidus (strain ATCC 49558 / DSM 4304 / JCM 9628 / NBRC 100126 / VC-16).